The sequence spans 214 residues: Small ribosomal subunit protein eS6 (214 aa).

It belongs to the eukaryotic ribosomal protein eS6 family.

The polypeptide is Small ribosomal subunit protein eS6 (rps6e) (Saccharolobus islandicus (strain Y.G.57.14 / Yellowstone #1) (Sulfolobus islandicus)).